Reading from the N-terminus, the 331-residue chain is Phosphoribosylformylglycinamidine cyclo-ligase (331 aa).

The protein belongs to the AIR synthase family.

It is found in the cytoplasm. The enzyme catalyses 2-formamido-N(1)-(5-O-phospho-beta-D-ribosyl)acetamidine + ATP = 5-amino-1-(5-phospho-beta-D-ribosyl)imidazole + ADP + phosphate + H(+). Its pathway is purine metabolism; IMP biosynthesis via de novo pathway; 5-amino-1-(5-phospho-D-ribosyl)imidazole from N(2)-formyl-N(1)-(5-phospho-D-ribosyl)glycinamide: step 2/2. The protein is Phosphoribosylformylglycinamidine cyclo-ligase of Clostridium novyi (strain NT).